Here is a 1141-residue protein sequence, read N- to C-terminus: Serine-aspartate repeat-containing protein E (1141 aa).

The first 52 residues, methionine 1–alanine 52, serve as a signal peptide directing secretion. A YSIRK-G/S signaling motif motif is present at residues phenylalanine 23 to serine 34. The interval alanine 53–lysine 601 is ligand binding A region. Positions glutamate 54 to proline 248 are disordered. Positions alanine 61–valine 75 are enriched in basic and acidic residues. A compositionally biased stretch (low complexity) spans glutamate 77 to asparagine 90. Basic and acidic residues predominate over residues isoleucine 92–serine 108. Residues threonine 109–threonine 126 are compositionally biased toward low complexity. The span at asparagine 130–threonine 145 shows a compositional bias: basic and acidic residues. Polar residues predominate over residues asparagine 159–threonine 207. The span at serine 216–threonine 241 shows a compositional bias: basic and acidic residues. 3 consecutive CNA-B domains span residues leucine 602 to proline 714, lysine 715 to proline 824, and lysine 825 to threonine 935. Residues valine 899–alanine 1117 form a disordered region. 2 stretches are compositionally biased toward acidic residues: residues threonine 903–glutamate 913 and tyrosine 930–serine 1080. The LPXTG sorting signal motif lies at leucine 1104–glycine 1108. Threonine 1107 carries the post-translational modification Pentaglycyl murein peptidoglycan amidated threonine. A propeptide spans glycine 1108–lysine 1141 (removed by sortase).

It belongs to the serine-aspartate repeat-containing protein (SDr) family. Interacts with host complement factor H/CFAH (via C-terminus). Interacts with host complement regulator C4BPA.

Its subcellular location is the secreted. The protein resides in the cell wall. In terms of biological role, cell surface-associated calcium-binding protein which plays an important role in adhesion and pathogenesis. Contributes to the resistance to killing by innate immune components in blood and thus attenuates bacterial clearance by interacting with host complement factor H/CFAH and modulating its activity. Also inhibits bacterial opsonization and killing by interacting with host complement regulator C4BPA and thus inhibiting classical complement pathway activation. This is Serine-aspartate repeat-containing protein E (sdrE) from Staphylococcus aureus (strain N315).